A 398-amino-acid polypeptide reads, in one-letter code: Carbamoyl phosphate synthase small chain (398 aa).

Positions 1 to 204 are CPSase; sequence MSPLLPSFPP…PAYGTLDTGK (204 aa). L-glutamine is bound by residues Ser-53, Gly-256, and Gly-258. The region spanning 208-395 is the Glutamine amidotransferase type-1 domain; that stretch reads KVVAYDFGVK…VELMNAASKK (188 aa). The Nucleophile role is filled by Cys-284. The L-glutamine site is built by Leu-285, Gln-288, Asn-326, Gly-328, and Phe-329. Active-site residues include His-368 and Glu-370.

The protein belongs to the CarA family. In terms of assembly, composed of two chains; the small (or glutamine) chain promotes the hydrolysis of glutamine to ammonia, which is used by the large (or ammonia) chain to synthesize carbamoyl phosphate. Tetramer of heterodimers (alpha,beta)4.

The enzyme catalyses hydrogencarbonate + L-glutamine + 2 ATP + H2O = carbamoyl phosphate + L-glutamate + 2 ADP + phosphate + 2 H(+). It carries out the reaction L-glutamine + H2O = L-glutamate + NH4(+). Its pathway is amino-acid biosynthesis; L-arginine biosynthesis; carbamoyl phosphate from bicarbonate: step 1/1. The protein operates within pyrimidine metabolism; UMP biosynthesis via de novo pathway; (S)-dihydroorotate from bicarbonate: step 1/3. In terms of biological role, small subunit of the glutamine-dependent carbamoyl phosphate synthetase (CPSase). CPSase catalyzes the formation of carbamoyl phosphate from the ammonia moiety of glutamine, carbonate, and phosphate donated by ATP, constituting the first step of 2 biosynthetic pathways, one leading to arginine and/or urea and the other to pyrimidine nucleotides. The small subunit (glutamine amidotransferase) binds and cleaves glutamine to supply the large subunit with the substrate ammonia. This chain is Carbamoyl phosphate synthase small chain, found in Polynucleobacter necessarius subsp. necessarius (strain STIR1).